The chain runs to 307 residues: D-alanine--D-alanine ligase (307 aa).

An ATP-grasp domain is found at 105–304; the sequence is KMLWKGFGLP…FEKLVEKILE (200 aa). 135–190 is an ATP binding site; sequence VARLGLPLMVKPSREGSSVGLTKVDSADKLKSAVDLALKFDDIVLIEEWLSGDELT. The Mg(2+) site is built by Asp258, Glu271, and Asn273.

Belongs to the D-alanine--D-alanine ligase family. Mg(2+) is required as a cofactor. Requires Mn(2+) as cofactor.

The protein localises to the cytoplasm. The enzyme catalyses 2 D-alanine + ATP = D-alanyl-D-alanine + ADP + phosphate + H(+). It functions in the pathway cell wall biogenesis; peptidoglycan biosynthesis. In terms of biological role, cell wall formation. The polypeptide is D-alanine--D-alanine ligase (Actinobacillus succinogenes (strain ATCC 55618 / DSM 22257 / CCUG 43843 / 130Z)).